A 272-amino-acid chain; its full sequence is MSVAKKEYKRITVKSLVDMKSNGEKISMLTAYDFTMAQIVDGAGIDVILVGDSASNVMAGHETTLPITLDQMIYHATSVVRAITRSLVVVDLPFGSYQSDPKEALRSAIRIMKESGGHAVKLEGGKEVKESIKRIIHAGIPVMGHLGLTPQSIYKFGTYTVRAKEEQEAEKLKSDAKLLEKMGCFAIVLEKVPAELAKEVAESITIPVIGIGAGNGVDGQVLVVHDMLGMTHEFNPRFLRRYADLHGEMTKAFQNYRDDVKSRKFPSDDEQY.

Mg(2+) is bound by residues D52 and D91. Residues 52–53 (DS), D91, and K121 contribute to the 3-methyl-2-oxobutanoate site. E123 lines the Mg(2+) pocket. E190 (proton acceptor) is an active-site residue.

It belongs to the PanB family. As to quaternary structure, homodecamer; pentamer of dimers. Mg(2+) is required as a cofactor.

The protein resides in the cytoplasm. The enzyme catalyses 3-methyl-2-oxobutanoate + (6R)-5,10-methylene-5,6,7,8-tetrahydrofolate + H2O = 2-dehydropantoate + (6S)-5,6,7,8-tetrahydrofolate. The protein operates within cofactor biosynthesis; (R)-pantothenate biosynthesis; (R)-pantoate from 3-methyl-2-oxobutanoate: step 1/2. Its function is as follows. Catalyzes the reversible reaction in which hydroxymethyl group from 5,10-methylenetetrahydrofolate is transferred onto alpha-ketoisovalerate to form ketopantoate. The chain is 3-methyl-2-oxobutanoate hydroxymethyltransferase from Christiangramia forsetii (strain DSM 17595 / CGMCC 1.15422 / KT0803) (Gramella forsetii).